The chain runs to 359 residues: N-acetyl-gamma-glutamyl-phosphate reductase (359 aa).

The active site involves C162.

The protein belongs to the NAGSA dehydrogenase family. Type 1 subfamily.

It is found in the cytoplasm. It catalyses the reaction N-acetyl-L-glutamate 5-semialdehyde + phosphate + NADP(+) = N-acetyl-L-glutamyl 5-phosphate + NADPH + H(+). Its pathway is amino-acid biosynthesis; L-arginine biosynthesis; N(2)-acetyl-L-ornithine from L-glutamate: step 3/4. In terms of biological role, catalyzes the NADPH-dependent reduction of N-acetyl-5-glutamyl phosphate to yield N-acetyl-L-glutamate 5-semialdehyde. The polypeptide is N-acetyl-gamma-glutamyl-phosphate reductase (Prochlorococcus marinus (strain NATL1A)).